Here is a 503-residue protein sequence, read N- to C-terminus: Maturase K (503 aa).

This sequence belongs to the intron maturase 2 family. MatK subfamily.

The protein resides in the plastid. The protein localises to the chloroplast. Its function is as follows. Usually encoded in the trnK tRNA gene intron. Probably assists in splicing its own and other chloroplast group II introns. This chain is Maturase K, found in Rosa gigantea (Giant tea rose).